A 184-amino-acid chain; its full sequence is Orotate phosphoribosyltransferase (184 aa).

5-phospho-alpha-D-ribose 1-diphosphate contacts are provided by residues Arg99, Lys100, Lys103, His105, and 125-133 (EDTTTTGNS). The orotate site is built by Thr129 and Arg157.

It belongs to the purine/pyrimidine phosphoribosyltransferase family. PyrE subfamily. Homodimer. The cofactor is Mg(2+).

It carries out the reaction orotidine 5'-phosphate + diphosphate = orotate + 5-phospho-alpha-D-ribose 1-diphosphate. It functions in the pathway pyrimidine metabolism; UMP biosynthesis via de novo pathway; UMP from orotate: step 1/2. Catalyzes the transfer of a ribosyl phosphate group from 5-phosphoribose 1-diphosphate to orotate, leading to the formation of orotidine monophosphate (OMP). This chain is Orotate phosphoribosyltransferase, found in Corynebacterium glutamicum (strain R).